The chain runs to 232 residues: MAGFKKKVYTSGLGTAEPYAYLSKPDYGNEERGFGNPRGVYKVDLTLSNKDPRCQAMVDEIVKTHEEAYAAAVEEFEANPPQVQRGKKPLTPYEGDMPFFDNGDGTTTFKFKCYASFQDKKTKETKHINLVVVDSKGKKIQEVPIIGGGSKLKVKYSLVPYKWNTAVGASVKLQLESVMLVELATFGGGGEDEWADEVEDGGYTASESRQSRDEQEWQEDEHEETPDDDEDF.

Acidic residues-rich tracts occupy residues 190-200 and 216-232; these read GEDEWADEVED and EWQE…DEDF. The tract at residues 190–232 is disordered; that stretch reads GEDEWADEVEDGGYTASESRQSRDEQEWQEDEHEETPDDDEDF. Residues 213-232 are dimerization and interaction with the viral DNA polymerase and helicase; it reads DEQEWQEDEHEETPDDDEDF.

It belongs to the Teseptimavirus single-stranded DNA-binding protein family. In terms of assembly, homodimer. Interacts (via C-terminus) with the viral DNA polymerase. Interacts with the viral helicase/primase. Part of the replicase complex that includes the DNA polymerase, the primase/helicase and the single-stranded DNA binding protein.

In terms of biological role, single-stranded DNA-binding protein that participates in viral DNA replication, formation of concatemers, recombination and repair of double-stranded breaks. Coats the lagging-strand ssDNA as the replication fork advances and stimulates the activities of viral DNA polymerase and primase/helicase. Coordinates simultaneous synthesis of leading- and lagging-strands. Together with DNA primase/helicase, promotes pairing of two homologous DNA molecules containing complementary single-stranded regions and mediates homologous DNA strand exchange. Also promotes the formation of joint molecules. Disrupts loops, hairpins and other secondary structures present on ssDNA to reduce and eliminate pausing of viral DNA polymerase at specific sites during elongation. The polypeptide is Single-stranded DNA-binding protein (2.5) (Enterobacteria phage T3 (Bacteriophage T3)).